Here is a 329-residue protein sequence, read N- to C-terminus: Cathepsin K (329 aa).

A signal peptide spans 1–15 (MWVFKFLLLPMVSFA). Positions 16 to 114 (LSPEEMLDTQ…TLYTPEWEGR (99 aa)) are cleaved as a propeptide — activation peptide. N103 carries an N-linked (GlcNAc...) asparagine glycan. 2 cysteine pairs are disulfide-bonded: C136–C177 and C170–C210. C139 is a catalytic residue. Residue N213 is glycosylated (N-linked (GlcNAc...) asparagine). A disulfide bridge links C269 with C318. Residues H276 and N296 contribute to the active site.

This sequence belongs to the peptidase C1 family. In terms of tissue distribution, predominantly expressed in bones. Expressed in thyroid epithelial cells.

It localises to the lysosome. Its subcellular location is the secreted. It is found in the apical cell membrane. It catalyses the reaction Broad proteolytic activity. With small-molecule substrates and inhibitors, the major determinant of specificity is P2, which is preferably Leu, Met &gt; Phe, and not Arg.. Thiol protease involved in osteoclastic bone resorption. Displays potent endoprotease activity against fibrinogen at acid pH. May play an important role in extracellular matrix degradation. Involved in the release of thyroid hormone thyroxine (T4) by limited proteolysis of TG/thyroglobulin in the thyroid follicle lumen. The polypeptide is Cathepsin K (Ctsk) (Mus musculus (Mouse)).